The primary structure comprises 197 residues: Imidazoleglycerol-phosphate dehydratase (197 aa).

The protein belongs to the imidazoleglycerol-phosphate dehydratase family.

Its subcellular location is the cytoplasm. It carries out the reaction D-erythro-1-(imidazol-4-yl)glycerol 3-phosphate = 3-(imidazol-4-yl)-2-oxopropyl phosphate + H2O. It functions in the pathway amino-acid biosynthesis; L-histidine biosynthesis; L-histidine from 5-phospho-alpha-D-ribose 1-diphosphate: step 6/9. The chain is Imidazoleglycerol-phosphate dehydratase from Hahella chejuensis (strain KCTC 2396).